The chain runs to 283 residues: Lectin subunit alpha (283 aa).

The N-terminal stretch at 1–23 (MSLTMKNVEGFVIFLVIFTSTAA) is a signal peptide. The region spanning 51–159 (HECARHDQQL…NVKMGYICEP (109 aa)) is the C-type lectin domain. Cystine bridges form between cysteine 53–cysteine 157 and cysteine 132–cysteine 149.

Its function is as follows. Role in the defense system of the organism against microorganisms. This lectin binds galactose. This is Lectin subunit alpha from Sarcophaga peregrina (Flesh fly).